Here is a 160-residue protein sequence, read N- to C-terminus: Crossover junction endodeoxyribonuclease RuvC (160 aa).

Active-site residues include aspartate 7, glutamate 70, and aspartate 142. 3 residues coordinate Mg(2+): aspartate 7, glutamate 70, and aspartate 142.

The protein belongs to the RuvC family. In terms of assembly, homodimer which binds Holliday junction (HJ) DNA. The HJ becomes 2-fold symmetrical on binding to RuvC with unstacked arms; it has a different conformation from HJ DNA in complex with RuvA. In the full resolvosome a probable DNA-RuvA(4)-RuvB(12)-RuvC(2) complex forms which resolves the HJ. Mg(2+) serves as cofactor.

The protein resides in the cytoplasm. The catalysed reaction is Endonucleolytic cleavage at a junction such as a reciprocal single-stranded crossover between two homologous DNA duplexes (Holliday junction).. Its function is as follows. The RuvA-RuvB-RuvC complex processes Holliday junction (HJ) DNA during genetic recombination and DNA repair. Endonuclease that resolves HJ intermediates. Cleaves cruciform DNA by making single-stranded nicks across the HJ at symmetrical positions within the homologous arms, yielding a 5'-phosphate and a 3'-hydroxyl group; requires a central core of homology in the junction. The consensus cleavage sequence is 5'-(A/T)TT(C/G)-3'. Cleavage occurs on the 3'-side of the TT dinucleotide at the point of strand exchange. HJ branch migration catalyzed by RuvA-RuvB allows RuvC to scan DNA until it finds its consensus sequence, where it cleaves and resolves the cruciform DNA. This chain is Crossover junction endodeoxyribonuclease RuvC, found in Ehrlichia ruminantium (strain Gardel).